We begin with the raw amino-acid sequence, 358 residues long: MKQIQVDLGVRSYPIYIGQNLMSDGETLSRYLLKKRILIVTNETVAPLYLKQIQETMASFGEVESVILPDGEQFKDLAHLDTIFTALLQQNYGRDSVLVALGGGVIGDMTGFAAACYQRGIDFIQIPTTLLSQVDSSVGGKTAVNHPLGKNMIGAFYQPQIVLIDTLCLHTLPAREFAAGMAEVIKYGIMWDADFFQWLEDNVTALKTLDAQALVYAISRCCEIKADVVSQDETEQGVRALLNLGHTFGHAIEAEMGYGNWLHGEAVSAGTVLAAQTAKALGLIDESIVCRIIQLLQAFDLPVSAPESMDFDSFIQHMRRDKKVLGGQIRLVLPTAIGRADVFSQVTESTLEQVIRCA.

NAD(+) is bound by residues 70-75, 104-108, 128-129, lysine 141, lysine 150, and 168-171; these read DGEQFK, GVIGD, TT, and CLHT. The Zn(2+) site is built by glutamate 183, histidine 246, and histidine 263.

Belongs to the sugar phosphate cyclases superfamily. Dehydroquinate synthase family. The cofactor is Co(2+). Zn(2+) serves as cofactor. It depends on NAD(+) as a cofactor.

Its subcellular location is the cytoplasm. The catalysed reaction is 7-phospho-2-dehydro-3-deoxy-D-arabino-heptonate = 3-dehydroquinate + phosphate. Its pathway is metabolic intermediate biosynthesis; chorismate biosynthesis; chorismate from D-erythrose 4-phosphate and phosphoenolpyruvate: step 2/7. Catalyzes the conversion of 3-deoxy-D-arabino-heptulosonate 7-phosphate (DAHP) to dehydroquinate (DHQ). The chain is 3-dehydroquinate synthase from Shewanella baltica (strain OS195).